Consider the following 223-residue polypeptide: Phosphoribosylformylglycinamidine synthase subunit PurQ (223 aa).

Residues lysine 4–alanine 223 form the Glutamine amidotransferase type-1 domain. Cysteine 87 serves as the catalytic Nucleophile. Residues histidine 195 and glutamate 197 contribute to the active site.

Part of the FGAM synthase complex composed of 1 PurL, 1 PurQ and 2 PurS subunits.

It localises to the cytoplasm. It catalyses the reaction N(2)-formyl-N(1)-(5-phospho-beta-D-ribosyl)glycinamide + L-glutamine + ATP + H2O = 2-formamido-N(1)-(5-O-phospho-beta-D-ribosyl)acetamidine + L-glutamate + ADP + phosphate + H(+). The enzyme catalyses L-glutamine + H2O = L-glutamate + NH4(+). Its pathway is purine metabolism; IMP biosynthesis via de novo pathway; 5-amino-1-(5-phospho-D-ribosyl)imidazole from N(2)-formyl-N(1)-(5-phospho-D-ribosyl)glycinamide: step 1/2. Its function is as follows. Part of the phosphoribosylformylglycinamidine synthase complex involved in the purines biosynthetic pathway. Catalyzes the ATP-dependent conversion of formylglycinamide ribonucleotide (FGAR) and glutamine to yield formylglycinamidine ribonucleotide (FGAM) and glutamate. The FGAM synthase complex is composed of three subunits. PurQ produces an ammonia molecule by converting glutamine to glutamate. PurL transfers the ammonia molecule to FGAR to form FGAM in an ATP-dependent manner. PurS interacts with PurQ and PurL and is thought to assist in the transfer of the ammonia molecule from PurQ to PurL. The chain is Phosphoribosylformylglycinamidine synthase subunit PurQ from Corynebacterium glutamicum (strain ATCC 13032 / DSM 20300 / JCM 1318 / BCRC 11384 / CCUG 27702 / LMG 3730 / NBRC 12168 / NCIMB 10025 / NRRL B-2784 / 534).